Reading from the N-terminus, the 314-residue chain is 3'-5' exoribonuclease YhaM (314 aa).

The HD domain maps to 163–279 (HVVSMLNLAK…LHYIDNLDAK (117 aa)).

The protein belongs to the YhaM family.

In terms of biological role, shows a 3'-5' exoribonuclease activity. The protein is 3'-5' exoribonuclease YhaM of Bacillus velezensis (strain DSM 23117 / BGSC 10A6 / LMG 26770 / FZB42) (Bacillus amyloliquefaciens subsp. plantarum).